The following is a 615-amino-acid chain: Neurosecretory protein VGF (615 aa).

An N-terminal signal peptide occupies residues 1–22 (MKALRLSASALFCLLLINGLGA). Disordered stretches follow at residues 22-201 (AAPP…ESPG) and 218-257 (PERA…PKTH). 2 stretches are compositionally biased toward pro residues: residues 25–35 (PGRPEAQPPPL) and 129–141 (PESP…PRPQ). Residues 179–194 (ETAAAETETRTHTLTR) show a composition bias toward low complexity. Q310 bears the Pyrrolidone carboxylic acid mark. The tract at residues 342–600 (RQRGLGGRGL…EAEERRLQEQ (259 aa)) is disordered. Over residues 378 to 394 (VGEEDEEAAEAEAEAEE) the composition is skewed to acidic residues. The span at 415 to 433 (AEDKRSQEETPGHRRKEAE) shows a compositional bias: basic and acidic residues. S420 bears the Phosphoserine; by FAM20C mark. T424 bears the Phosphothreonine; by FAM20C mark. Positions 434-448 (GTEEGGEEEDDEEMD) are enriched in acidic residues. The span at 487–497 (PPEPVPPPRAA) shows a compositional bias: pro residues. P577 is modified (proline amide). Over residues 577 to 599 (PGREAQARRAQEEAEAEERRLQE) the composition is skewed to basic and acidic residues.

As to quaternary structure, interacts with HSPA8 on cell membrane. Interacts with C3AR1. Interacts with C1QBP. Multiple peptides are derived from VGF, with activities in synaptic plasticity, antidepression, penile erection, autonomic activation, and increases in energy expenditure. Central and peripheral nervous systems, synthesized exclusively in neuronal and neuroendocrine cells.

Its subcellular location is the secreted. It localises to the cytoplasmic vesicle. It is found in the secretory vesicle. In terms of biological role, secreted polyprotein that is packaged and proteolytically processed by prohormone convertases PCSK1 and PCSK2 in a cell-type-specific manner. VGF and peptides derived from its processing play many roles in neurogenesis and neuroplasticity associated with learning, memory, depression and chronic pain. Its function is as follows. Plays a role in the control of body fluid homeostasis by regulating vasopressin release. Suppresses presynaptic glutamatergic neurons connected to vasopressin neurons. Functionally, plays a role in the control of body fluid homeostasis by regulating vasopressin release. Activates GABAergic interneurons which are inhibitory neurons of the nervous system and thereby suppresses presynaptic glutamatergic neurons. Also stimulates feeding behavior in an orexin-dependent manner in the hypothalamus. Functions as a positive regulator for the activation of orexin neurons resulting in elevated gastric acid secretion and gastric emptying. Secreted multifunctional neuropeptide that binds to different cell receptors and thereby plays multiple physiological roles including modulation of energy expenditure, pain, response to stress, gastric regulation, glucose homeostasis as well as lipolysis. Activates the G-protein-coupled receptor C3AR1 via a folding-upon-binding mechanism leading to enhanced lipolysis in adipocytes. Interacts with C1QBP receptor in macrophages and microglia causing increased levels of intracellular calcium and hypersensitivity. In terms of biological role, plays a role in the regulation of memory formation and depression-related behaviors potentially by influencing synaptic plasticity and neurogenesis. Induces acute and transient activation of the NTRK2/TRKB receptor and subsequent CREB phosphorylation. Also induces insulin secretion in insulinoma cells by increasing intracellular calcium mobilization. Its function is as follows. Has bactericidal activity against M.luteus, and antifungal activity against P. Pastoris. The sequence is that of Neurosecretory protein VGF (VGF) from Homo sapiens (Human).